Reading from the N-terminus, the 462-residue chain is Fumarate hydratase class II (462 aa).

Substrate contacts are provided by residues 97-99, 127-130, 137-139, and threonine 185; these read SGT, HPND, and SSN. Histidine 186 serves as the catalytic Proton donor/acceptor. The active site involves serine 316. Substrate-binding positions include serine 317 and 322–324; that span reads KVN.

Belongs to the class-II fumarase/aspartase family. Fumarase subfamily. Homotetramer.

The protein resides in the cytoplasm. The catalysed reaction is (S)-malate = fumarate + H2O. Its pathway is carbohydrate metabolism; tricarboxylic acid cycle; (S)-malate from fumarate: step 1/1. Its function is as follows. Involved in the TCA cycle. Catalyzes the stereospecific interconversion of fumarate to L-malate. In Halalkalibacterium halodurans (strain ATCC BAA-125 / DSM 18197 / FERM 7344 / JCM 9153 / C-125) (Bacillus halodurans), this protein is Fumarate hydratase class II.